The following is a 467-amino-acid chain: UDP-N-acetylmuramoylalanine--D-glutamate ligase (467 aa).

An ATP-binding site is contributed by 121 to 127 (GTNGKST).

It belongs to the MurCDEF family.

It localises to the cytoplasm. The catalysed reaction is UDP-N-acetyl-alpha-D-muramoyl-L-alanine + D-glutamate + ATP = UDP-N-acetyl-alpha-D-muramoyl-L-alanyl-D-glutamate + ADP + phosphate + H(+). Its pathway is cell wall biogenesis; peptidoglycan biosynthesis. Functionally, cell wall formation. Catalyzes the addition of glutamate to the nucleotide precursor UDP-N-acetylmuramoyl-L-alanine (UMA). The chain is UDP-N-acetylmuramoylalanine--D-glutamate ligase from Brucella abortus (strain 2308).